Here is a 151-residue protein sequence, read N- to C-terminus: 3-hydroxyacyl-thioester dehydratase Z (151 aa).

The region spanning 11-131 (AAAAGEKVGQ…TVQATVSTTV (121 aa)) is the MaoC-like domain. Residues 60 to 63 (IAHG), 86 to 89 (AINY), 97 to 99 (PAP), glutamine 124, and arginine 148 each bind substrate.

The protein belongs to the enoyl-CoA hydratase/isomerase family. As to quaternary structure, homodimer.

It carries out the reaction a (3R)-3-hydroxyacyl-CoA = a (2E)-enoyl-CoA + H2O. Shows trans-enoyl-CoA hydratase/3-hydroxyacyl-CoA dehydratase activity. This chain is 3-hydroxyacyl-thioester dehydratase Z, found in Mycobacterium bovis (strain ATCC BAA-935 / AF2122/97).